We begin with the raw amino-acid sequence, 450 residues long: Phosphoglucosamine mutase 2 (450 aa).

The active-site Phosphoserine intermediate is the S101. Mg(2+) contacts are provided by S101, D245, D247, and D249. S101 carries the phosphoserine modification.

Belongs to the phosphohexose mutase family. The cofactor is Mg(2+). Activated by phosphorylation.

The catalysed reaction is alpha-D-glucosamine 1-phosphate = D-glucosamine 6-phosphate. Catalyzes the conversion of glucosamine-6-phosphate to glucosamine-1-phosphate. This chain is Phosphoglucosamine mutase 2, found in Shewanella sp. (strain MR-7).